The following is a 301-amino-acid chain: Ornithine carbamoyltransferase (301 aa).

Carbamoyl phosphate is bound by residues Arg107 and His134 to Gln137. Residues Asn165, Asp220, and Ser224–Met225 contribute to the L-ornithine site. Carbamoyl phosphate-binding positions include Cys260–Leu261 and Arg288.

The protein belongs to the aspartate/ornithine carbamoyltransferase superfamily. OTCase family. As to quaternary structure, homotrimer.

It is found in the cytoplasm. It catalyses the reaction carbamoyl phosphate + L-ornithine = L-citrulline + phosphate + H(+). It participates in amino-acid biosynthesis; L-arginine biosynthesis; L-arginine from L-ornithine and carbamoyl phosphate: step 1/3. Inhibited by delta-N-phosphonoacetyl-L-ornithine. Its function is as follows. Reversibly catalyzes the transfer of the carbamoyl group from carbamoyl phosphate (CP) to the N(epsilon) atom of ornithine (ORN) to produce L-citrulline, which is a substrate for argininosuccinate synthetase, the enzyme involved in the final step in arginine biosynthesis. The chain is Ornithine carbamoyltransferase from Thermus thermophilus (strain ATCC BAA-163 / DSM 7039 / HB27).